A 321-amino-acid chain; its full sequence is NADH-ubiquinone oxidoreductase chain 1 (321 aa).

The next 8 helical transmembrane spans lie at 2-22, 71-91, 104-124, 148-168, 173-193, 224-244, 255-275, and 295-315; these read LVML…VAFL, ALFI…WMFI, LLVI…SGWA, LGLI…QAFI, HTWF…STLA, LFFL…AIMF, ILPI…FLWI, and FLPL…SLGG.

It belongs to the complex I subunit 1 family.

It is found in the mitochondrion inner membrane. The enzyme catalyses a ubiquinone + NADH + 5 H(+)(in) = a ubiquinol + NAD(+) + 4 H(+)(out). In terms of biological role, core subunit of the mitochondrial membrane respiratory chain NADH dehydrogenase (Complex I) that is believed to belong to the minimal assembly required for catalysis. Complex I functions in the transfer of electrons from NADH to the respiratory chain. The immediate electron acceptor for the enzyme is believed to be ubiquinone. The chain is NADH-ubiquinone oxidoreductase chain 1 (MT-ND1) from Lampetra fluviatilis (European river lamprey).